Consider the following 552-residue polypeptide: MAAKDVKFSRDARERMLRGVNILADAVKVTLGPKGRNVVIDKSFGAPRITKDGVTVAKEIELEDKFENMGAQMVREVASKTNDIAGDGTTTATVLAQSIVQEGHKAVAAGMNPMDLKRGIDLAVSDVVWTLIKNATKIKTSEEVAQVGTIAGNGDESVGKMIAEAMQKVGNEGVITVEEAKTAETELEVVEGMQFDRGYLSPYFVTNADKMVADLEDAYILLHEKKLSNLQAMLPVLEAVVQTSKPLLIISEDVEGEALATLVVNKLRGGLKIAAVKAPGFGDRRKAMLEDIAILTGGQVISEDLGIKLENVGLDMLGRAKKVSISKENTTIVDGAGKKEEIQGRVAQIKQQIEETTSDYDKEKLQERLAKLAGGVAVIRVGGATEVEVKEKKDRVDDALNATRAAVEEGIVPGGGVALLRASLSINAVGANSDQTAGISIVRRALQAPARQIAANAGAEASIVAGKILENKGATFGFNAQTGEYGDMIAMGIVDPVKVVRTALQDAASVAGLLVTTEAMIAEAPKKESAGGGGMPGGMGGGGMGGMGGMDF.

ATP-binding positions include 30 to 33 (TLGP), Lys51, 87 to 91 (DGTTT), Gly415, and Asp495.

The protein belongs to the chaperonin (HSP60) family. Forms a cylinder of 14 subunits composed of two heptameric rings stacked back-to-back. Interacts with the co-chaperonin GroES.

It localises to the cytoplasm. It carries out the reaction ATP + H2O + a folded polypeptide = ADP + phosphate + an unfolded polypeptide.. Together with its co-chaperonin GroES, plays an essential role in assisting protein folding. The GroEL-GroES system forms a nano-cage that allows encapsulation of the non-native substrate proteins and provides a physical environment optimized to promote and accelerate protein folding. This chain is Chaperonin GroEL 3, found in Mesorhizobium japonicum (strain LMG 29417 / CECT 9101 / MAFF 303099) (Mesorhizobium loti (strain MAFF 303099)).